Consider the following 240-residue polypeptide: Serine protease SplB (240 aa).

The N-terminal stretch at M1–A36 is a signal peptide. Residues H75, D113, and S193 each act as charge relay system in the active site.

The protein belongs to the peptidase S1B family.

The protein localises to the secreted. Its function is as follows. Serine protease that cleaves specifically after the sequence Trp-Glu-Leu-Gln. In Staphylococcus aureus (strain Mu3 / ATCC 700698), this protein is Serine protease SplB (splB).